Reading from the N-terminus, the 515-residue chain is Protein aaim-1 (515 aa).

The first 16 residues, 1-16 (MRLLFFFSILYTASLC), serve as a signal peptide directing secretion. 2 N-linked (GlcNAc...) asparagine glycosylation sites follow: Asn-46 and Asn-127. The disordered stretch occupies residues 248–267 (RRTDPNSKFKPRPTTSQSNG). N-linked (GlcNAc...) asparagine glycosylation is present at Asn-447.

Expressed in the terminal bulb of the pharynx and the posterior of the intestine (at protein level). Expressed by intestinal cells and secreted into the intestinal lumen (at protein level).

The protein resides in the secreted. Plays a role in promoting resistance to bacterial pathogens such as P.aeruginosa by inhibiting bacterial intestinal colonization. Its function is as follows. (Microbial infection) Promotes infection by microsporidian pathogens such as N.parisii in the early larval stages of development. Involved in ensuring the proper orientation and location of the spore proteins of N.parisii during intestinal cell invasion. This chain is Protein aaim-1, found in Caenorhabditis elegans.